The sequence spans 224 residues: 3-dehydroquinate dehydratase (224 aa).

Residues 30–32 (EWR) and Arg-62 each bind 3-dehydroquinate. Residue His-118 is the Proton donor/acceptor of the active site. The Schiff-base intermediate with substrate role is filled by Lys-143. Residues Arg-186, Ser-205, and Gln-209 each contribute to the 3-dehydroquinate site.

This sequence belongs to the type-I 3-dehydroquinase family. As to quaternary structure, homodimer.

It carries out the reaction 3-dehydroquinate = 3-dehydroshikimate + H2O. It functions in the pathway metabolic intermediate biosynthesis; chorismate biosynthesis; chorismate from D-erythrose 4-phosphate and phosphoenolpyruvate: step 3/7. Functionally, involved in the third step of the chorismate pathway, which leads to the biosynthesis of aromatic amino acids. Catalyzes the cis-dehydration of 3-dehydroquinate (DHQ) and introduces the first double bond of the aromatic ring to yield 3-dehydroshikimate. This chain is 3-dehydroquinate dehydratase, found in Streptococcus suis (strain 98HAH33).